The chain runs to 140 residues: ATP synthase epsilon chain, chloroplastic (140 aa).

The protein belongs to the ATPase epsilon chain family. F-type ATPases have 2 components, CF(1) - the catalytic core - and CF(0) - the membrane proton channel. CF(1) has five subunits: alpha(3), beta(3), gamma(1), delta(1), epsilon(1). CF(0) has three main subunits: a, b and c.

Its subcellular location is the plastid. It localises to the chloroplast thylakoid membrane. Its function is as follows. Produces ATP from ADP in the presence of a proton gradient across the membrane. This chain is ATP synthase epsilon chain, chloroplastic, found in Panax ginseng (Korean ginseng).